We begin with the raw amino-acid sequence, 618 residues long: Arginine--tRNA ligase (618 aa).

A 'HIGH' region motif is present at residues 113-123 (ANPIHPLHIGH).

This sequence belongs to the class-I aminoacyl-tRNA synthetase family.

Its subcellular location is the cytoplasm. It carries out the reaction tRNA(Arg) + L-arginine + ATP = L-arginyl-tRNA(Arg) + AMP + diphosphate. The polypeptide is Arginine--tRNA ligase (Sulfolobus acidocaldarius (strain ATCC 33909 / DSM 639 / JCM 8929 / NBRC 15157 / NCIMB 11770)).